A 352-amino-acid polypeptide reads, in one-letter code: MRPLNVQIRLGNLRHNYRILKEMHGGKLLAVVKADAYGHGAVRCAFALADLADGFAVATIDEGIRLRESGITHPIVLLEGVFEASEYEAVEQYSLWPAVGNQWQLEALLIRHWKKTVKVWLKMDSGMHRTGFFPHDYASAYAALKQSEYVDSIVKFSHFSCADEPESGMTEIQMEAFDLGTEGLEGEESLANSAAILNVPEARRDWGRAGLALYGISPFGGGDDRLKPVMRLSTRIFGERVLQPHSPIGYGATFYTSKSTRVGLIACGYADGYPRRAPSNSPVAVDGKLTRVIGRVSMDMMTIELDASQEGLGHEVELWGDTVNINTVAEAAGTIPYELMCNIKRAKFTYIE.

Lys-33 acts as the Proton acceptor; specific for D-alanine in catalysis. Lys-33 is subject to N6-(pyridoxal phosphate)lysine. Residue Arg-129 coordinates substrate. Tyr-250 functions as the Proton acceptor; specific for L-alanine in the catalytic mechanism. Substrate is bound at residue Met-298.

This sequence belongs to the alanine racemase family. The cofactor is pyridoxal 5'-phosphate.

It carries out the reaction L-alanine = D-alanine. Its pathway is amino-acid biosynthesis; D-alanine biosynthesis; D-alanine from L-alanine: step 1/1. In terms of biological role, catalyzes the interconversion of L-alanine and D-alanine. May also act on other amino acids. The polypeptide is Alanine racemase (alr) (Neisseria meningitidis serogroup B (strain ATCC BAA-335 / MC58)).